A 1763-amino-acid chain; its full sequence is Collagen alpha-2(IV) chain (1763 aa).

The N-terminal stretch at 1-26 (MSSRLRIPLWLLLPTTALVYFVTTVS) is a signal peptide. The segment at 27–42 (TQITCRDCTNRGCFCV) is 7S domain. The segment at 43-1529 (GEKGSMGIPG…SGPPGPPGPS (1487 aa)) is triple-helical region. Disordered stretches follow at residues 51–529 (PGPQ…PGPK) and 550–1529 (AGYA…PGPS). Residues 72 to 81 (PGPKGQKGSQ) show a composition bias toward low complexity. Asn126 is a glycosylation site (N-linked (GlcNAc...) asparagine). Residues 135 to 152 (PGLPGPPGMPGFPGPPGV) are compositionally biased toward pro residues. Positions 190 to 199 (FPGEKGDRGD) are enriched in basic and acidic residues. The segment covering 206–217 (RGPPGEAGPPGN) has biased composition (pro residues). Residues 225–235 (PKGDPGEQGPR) show a composition bias toward low complexity. An O-linked (Xyl...) (glycosaminoglycan) serine glycan is attached at Ala249. Residues 326-335 (DGLPGVPGLP) show a composition bias toward low complexity. The segment covering 400–409 (GLPGGPGLPG) has biased composition (gly residues). Composition is skewed to low complexity over residues 410–419 (LPGLEGLPGP) and 428–453 (IPGA…PGPR). The span at 466-481 (KDGRPGLDGLPGRKGE) shows a compositional bias: basic and acidic residues. Over residues 564–582 (LPGIPGATGAPGDDGLPGA) the composition is skewed to low complexity. The span at 583–592 (PGRPGPPGPP) shows a compositional bias: pro residues. Composition is skewed to low complexity over residues 699-714 (DAGL…AVGP) and 731-783 (KDGL…PGIP). Residues 810-832 (PGLPGPKGEPGPSTTGPPGPPGF) are compositionally biased toward pro residues. Low complexity-rich tracts occupy residues 865-895 (EIGL…KEGP), 946-977 (FPGQ…PGQK), 1040-1051 (PGLPGQPGLRGP), 1077-1086 (LMGEKGLPGL), 1108-1146 (PGLK…QPGL), 1210-1231 (PGFP…PGPR), 1280-1296 (LPGL…PGLK), 1367-1386 (PAGL…PGFP), 1462-1480 (LPGL…FAGA), and 1499-1510 (PGLPGFPGIEGI). Over residues 1511–1528 (PGPPGLPGPSGPPGPPGP) the composition is skewed to pro residues. The Collagen IV NC1 domain maps to 1533-1756 (GFLLVKHSQT…SRCQVCIRSP (224 aa)). Intrachain disulfides connect Cys1548/Cys1637, Cys1581/Cys1634, Cys1593/Cys1599, Cys1656/Cys1752, Cys1690/Cys1749, and Cys1702/Cys1709.

It belongs to the type IV collagen family. As to quaternary structure, trimers of two alpha 1(IV) and one alpha 2(IV) chain. Type IV collagen forms a mesh-like network linked through intermolecular interactions between 7S domains and between NC1 domains. Prolines at the third position of the tripeptide repeating unit (G-X-Y) are hydroxylated in some or all of the chains. In terms of processing, type IV collagens contain numerous cysteine residues which are involved in inter- and intramolecular disulfide bonding. 12 of these, located in the NC1 domain, are conserved in all known type IV collagens. Post-translationally, the trimeric structure of the NC1 domains is stabilized by covalent bonds between Lys and Met residues.

It localises to the secreted. The protein resides in the extracellular space. Its subcellular location is the extracellular matrix. It is found in the basement membrane. In terms of biological role, collagen type IV is specific for basement membranes. The chain is Collagen alpha-2(IV) chain from Ascaris suum (Pig roundworm).